A 289-amino-acid polypeptide reads, in one-letter code: 4-diphosphocytidyl-2-C-methyl-D-erythritol kinase (289 aa).

The active site involves Lys10. 94–104 is an ATP binding site; it reads PVAAGLAGGSS. Asp136 is a catalytic residue.

This sequence belongs to the GHMP kinase family. IspE subfamily.

It carries out the reaction 4-CDP-2-C-methyl-D-erythritol + ATP = 4-CDP-2-C-methyl-D-erythritol 2-phosphate + ADP + H(+). It functions in the pathway isoprenoid biosynthesis; isopentenyl diphosphate biosynthesis via DXP pathway; isopentenyl diphosphate from 1-deoxy-D-xylulose 5-phosphate: step 3/6. Functionally, catalyzes the phosphorylation of the position 2 hydroxy group of 4-diphosphocytidyl-2C-methyl-D-erythritol. The chain is 4-diphosphocytidyl-2-C-methyl-D-erythritol kinase from Geobacillus sp. (strain WCH70).